The sequence spans 719 residues: BRCA1-A complex subunit RAP80 (719 aa).

Positions 1 to 30 are disordered; it reads MPRRKKKVKEVSESRNLEKKDVETTSSVSV. The necessary for transcriptional repression stretch occupies residues 1 to 101; it reads MPRRKKKVKE…SEQEAREVNS (101 aa). The segment covering 9-23 has biased composition (basic and acidic residues); sequence KEVSESRNLEKKDVE. A Glycyl lysine isopeptide (Lys-Gly) (interchain with G-Cter in SUMO2) cross-link involves residue Lys20. Ser29 carries the phosphoserine modification. Residue Lys31 forms a Glycyl lysine isopeptide (Lys-Gly) (interchain with G-Cter in SUMO2) linkage. Residues 43 to 68 are disordered; the sequence is ISDSDGEEPKEENGLQKTKTKQSNRA. Phosphoserine occurs at positions 44 and 46. An LR motif motif is present at residues 60–78; it reads TKTKQSNRAKCLAKRKIAQ. Residues Lys75 and Lys90 each participate in a glycyl lysine isopeptide (Lys-Gly) (interchain with G-Cter in SUMO2) cross-link. Residues 80 to 99 form the UIM 1 domain; the sequence is TEEEQFALALKMSEQEAREV. Disordered regions lie at residues 93-152 and 164-205; these read EQEA…DSGL and LFKG…DQSS. The segment at 97 to 103 is UIM-linker; the sequence is REVNSQE. The interval 100–200 is necessary for interaction with NR6A1 N-terminus; sequence NSQEEEEEEL…EEPVSGSSGS (101 aa). The residue at position 101 (Ser101) is a Phosphoserine. The UIM 2 domain occupies 105–124; sequence EEEELLRKAIAESLNSCRPS. Positions 117–130 are enriched in polar residues; that stretch reads SLNSCRPSDASATR. Phosphoserine is present on Ser140. Lys188 is covalently cross-linked (Glycyl lysine isopeptide (Lys-Gly) (interchain with G-Cter in SUMO2)). Low complexity predominate over residues 195 to 205; sequence SGSSGSWDQSS. A Phosphoserine modification is found at Ser205. Residue Lys245 forms a Glycyl lysine isopeptide (Lys-Gly) (interchain with G-Cter in SUMO2) linkage. The tract at residues 270–400 is AIR; it reads TGGTVNYFWG…EEEPTTSHGQ (131 aa). The segment at 320–378 is disordered; that stretch reads FGEPVLPRPPSLIQNECGQGEQASEKNECISEDMGDEDKEERQESRASDWHSKTKDFQE. Over residues 349-358 the composition is skewed to acidic residues; sequence ISEDMGDEDK. The segment covering 359–378 has biased composition (basic and acidic residues); sequence EERQESRASDWHSKTKDFQE. Ser379 is subject to Phosphoserine. Glycyl lysine isopeptide (Lys-Gly) (interchain with G-Cter in SUMO2) cross-links involve residues Lys382 and Lys387. The segment at 391-422 is disordered; that stretch reads EEEPTTSHGQSSQGIVEETSEEGNSVPASQSV. The interval 400-500 is necessary for interaction with NR6A1 C-terminus; sequence QSSQGIVEET…EVAISTFSSS (101 aa). 2 positions are modified to phosphoserine: Ser402 and Ser419. Residues 412–422 are compositionally biased toward polar residues; the sequence is EGNSVPASQSV. Lys428 is covalently cross-linked (Glycyl lysine isopeptide (Lys-Gly) (interchain with G-Cter in SUMO2)). Residue Ser466 is modified to Phosphoserine. The UBZ4-type zinc finger occupies 502 to 529; it reads QVSCPLCDQCFPPTKIERHAMYCNGLME. Cys505, Cys508, His520, and Cys524 together coordinate Zn(2+). Positions 505–582 are zinc-finger-like region; sequence CPLCDQCFPP…REYQCHVDSC (78 aa). Residues Lys544, Lys559, Lys562, Lys587, and Lys607 each participate in a glycyl lysine isopeptide (Lys-Gly) (interchain with G-Cter in SUMO2) cross-link. A disordered region spans residues 588-668; sequence ADQGDGPEGS…AGCSREMQSS (81 aa). The segment covering 614 to 623 has biased composition (basic and acidic residues); sequence NPKEKGHSEG. Phosphoserine is present on Ser627. Residues 631-643 show a composition bias toward basic and acidic residues; sequence QSEHKTSDADIKS. Residues Lys635 and Lys642 each participate in a glycyl lysine isopeptide (Lys-Gly) (interchain with G-Cter in SUMO2) cross-link. Residues Ser653 and Ser677 each carry the phosphoserine modification. Glycyl lysine isopeptide (Lys-Gly) (interchain with G-Cter in SUMO2) cross-links involve residues Lys696 and Lys697.

This sequence belongs to the RAP80 family. Component of the ARISC complex, at least composed of UIMC1/RAP80, ABRAXAS1, BRCC3/BRCC36, BABAM2 and BABAM1/NBA1. Component of the BRCA1-A complex, at least composed of the BRCA1, BARD1, UIMC1/RAP80, ABRAXAS1, BRCC3/BRCC36, BABAM2 and BABAM1/NBA1. In the BRCA1-A complex, interacts directly with ABRAXAS1. Interacts with UBE2I. Interacts with NR6A1. Interacts with ESR1. Interacts with TSP57. Interacts with TRAIP. Sumoylated. In terms of processing, phosphorylated upon DNA damage by ATM or ATR. As to expression, expressed in testis, ovary, thymus and heart. Expressed in germ cells of the testis.

The protein localises to the nucleus. In terms of biological role, ubiquitin-binding protein. Specifically recognizes and binds 'Lys-63'-linked ubiquitin. Plays a central role in the BRCA1-A complex by specifically binding 'Lys-63'-linked ubiquitinated histones H2A and H2AX at DNA lesions sites, leading to target the BRCA1-BARD1 heterodimer to sites of DNA damage at double-strand breaks (DSBs). The BRCA1-A complex also possesses deubiquitinase activity that specifically removes 'Lys-63'-linked ubiquitin on histones H2A and H2AX. Also weakly binds monoubiquitin but with much less affinity than 'Lys-63'-linked ubiquitin. May interact with monoubiquitinated histones H2A and H2B; the relevance of such results is however unclear in vivo. Does not bind Lys-48'-linked ubiquitin. May indirectly act as a transcriptional repressor by inhibiting the interaction of NR6A1 with the corepressor NCOR1. The protein is BRCA1-A complex subunit RAP80 (UIMC1) of Homo sapiens (Human).